The chain runs to 397 residues: Dual specificity mitogen-activated protein kinase kinase 4 (397 aa).

Residues 1 to 38 (MAAPSPSGGGGSGGGGGTPGPIGPPASGHPAVSSMQGK) are disordered. Position 2 is an N-acetylalanine (A2). Residues 7–20 (SGGGGSGGGGGTPG) show a composition bias toward gly residues. Residues 35-50 (MQGKRKALKLNFANPP) form a d domain region. The residue at position 56 (R56) is an Asymmetric dimethylarginine; alternate. R56 is modified (omega-N-methylarginine; alternate). S88 bears the Phosphoserine mark. The Protein kinase domain occupies 100–366 (LKDLGEIGRG…KELLKHPFIL (267 aa)). Residues 106 to 114 (IGRGAYGSV) and K129 each bind ATP. The Proton acceptor role is filled by D227. S255 is subject to Phosphoserine. T259 carries the phosphothreonine modification. The DVD domain stretch occupies residues 362–385 (HPFILMYEERTVEVACYVCKILDQ).

This sequence belongs to the protein kinase superfamily. STE Ser/Thr protein kinase family. MAP kinase kinase subfamily. In terms of assembly, interacts with SPAG9. Interacts (via its D domain) with its substrates MAPK8/JNK1, MAPK9/JNK2, MAPK10/JNK3, MAPK11 and MAPK14. Interacts (via its DVD domain) with MAP3Ks activators like MAP3K1/MEKK1 and MAP3K11/MLK3. Interacts with ARRB1, ARRB2 and MAPK8IP3/JIP3. In terms of processing, activated by phosphorylation on Ser-255 and Thr-259 by MAP kinase kinase kinases (MAP3Ks). As to expression, strong expression is detected in most of the central nervous system and in liver and thymus during early stages of development. While expression in nervous system increases over time, expression in fetal liver and thymus gradually decreases as embryogenesis proceeds. High level of expression in the central nervous system persists throughout postnatal development and remained at a stable level in adult brain.

Its subcellular location is the cytoplasm. The protein localises to the nucleus. The catalysed reaction is L-seryl-[protein] + ATP = O-phospho-L-seryl-[protein] + ADP + H(+). The enzyme catalyses L-threonyl-[protein] + ATP = O-phospho-L-threonyl-[protein] + ADP + H(+). It catalyses the reaction L-tyrosyl-[protein] + ATP = O-phospho-L-tyrosyl-[protein] + ADP + H(+). Its activity is regulated as follows. Activated in response to a variety of cellular stresses, including UV and gamma-irradiation, heat shock, hyperosmolarity, T-cell receptor stimulation, peroxide and inflammatory cytokines. Also activated by developmental cues. MAP2K4/MKK4 is activated by the majority of MKKKs, such as MAP3K5/ASK1, MAP3K1/MEKK1, MAP3K7/TAK1, MAP3K10/MLK2, MAP3K11/MLK3, MAP3K12/DLK and MAP3K13/LZK. Functionally, dual specificity protein kinase which acts as an essential component of the MAP kinase signal transduction pathway. Essential component of the stress-activated protein kinase/c-Jun N-terminal kinase (SAP/JNK) signaling pathway. With MAP2K7/MKK7, is the one of the only known kinase to directly activate the stress-activated protein kinase/c-Jun N-terminal kinases MAPK8/JNK1, MAPK9/JNK2 and MAPK10/JNK3. MAP2K4/MKK4 and MAP2K7/MKK7 both activate the JNKs by phosphorylation, but they differ in their preference for the phosphorylation site in the Thr-Pro-Tyr motif. MAP2K4 shows preference for phosphorylation of the Tyr residue and MAP2K7/MKK7 for the Thr residue. The phosphorylation of the Thr residue by MAP2K7/MKK7 seems to be the prerequisite for JNK activation at least in response to pro-inflammatory cytokines, while other stimuli activate both MAP2K4/MKK4 and MAP2K7/MKK7 which synergistically phosphorylate JNKs. MAP2K4 is required for maintaining peripheral lymphoid homeostasis. The MKK/JNK signaling pathway is also involved in mitochondrial death signaling pathway, including the release cytochrome c, leading to apoptosis. Whereas MAP2K7/MKK7 exclusively activates JNKs, MAP2K4/MKK4 additionally activates the p38 MAPKs MAPK11, MAPK12, MAPK13 and MAPK14. The polypeptide is Dual specificity mitogen-activated protein kinase kinase 4 (Map2k4) (Mus musculus (Mouse)).